The primary structure comprises 130 residues: DNA-directed RNA polymerase subunit omega (130 aa).

Disordered stretches follow at residues 80-99 (PEPD…DADD) and 110-130 (EELL…EEDE). Residues 110-124 (EELLKGLEGLAPREE) are compositionally biased toward basic and acidic residues.

Belongs to the RNA polymerase subunit omega family. In terms of assembly, the RNAP catalytic core consists of 2 alpha, 1 beta, 1 beta' and 1 omega subunit. When a sigma factor is associated with the core the holoenzyme is formed, which can initiate transcription.

The catalysed reaction is RNA(n) + a ribonucleoside 5'-triphosphate = RNA(n+1) + diphosphate. Its function is as follows. Promotes RNA polymerase assembly. Latches the N- and C-terminal regions of the beta' subunit thereby facilitating its interaction with the beta and alpha subunits. The sequence is that of DNA-directed RNA polymerase subunit omega from Nitrobacter hamburgensis (strain DSM 10229 / NCIMB 13809 / X14).